Here is a 432-residue protein sequence, read N- to C-terminus: Phosphomethylpyrimidine synthase (432 aa).

Residues asparagine 66, methionine 95, tyrosine 124, histidine 163, 185–187 (SRG), 226–229 (DGLR), and glutamate 265 contribute to the substrate site. Residue histidine 269 participates in Zn(2+) binding. Residue tyrosine 292 participates in substrate binding. Histidine 333 provides a ligand contact to Zn(2+). [4Fe-4S] cluster is bound by residues cysteine 409, cysteine 412, and cysteine 416.

It belongs to the ThiC family. [4Fe-4S] cluster serves as cofactor.

It carries out the reaction 5-amino-1-(5-phospho-beta-D-ribosyl)imidazole + S-adenosyl-L-methionine = 4-amino-2-methyl-5-(phosphooxymethyl)pyrimidine + CO + 5'-deoxyadenosine + formate + L-methionine + 3 H(+). The protein operates within cofactor biosynthesis; thiamine diphosphate biosynthesis. Functionally, catalyzes the synthesis of the hydroxymethylpyrimidine phosphate (HMP-P) moiety of thiamine from aminoimidazole ribotide (AIR) in a radical S-adenosyl-L-methionine (SAM)-dependent reaction. In Caldanaerobacter subterraneus subsp. tengcongensis (strain DSM 15242 / JCM 11007 / NBRC 100824 / MB4) (Thermoanaerobacter tengcongensis), this protein is Phosphomethylpyrimidine synthase.